A 500-amino-acid chain; its full sequence is Glycerol kinase (500 aa).

Residue T13 participates in ADP binding. Residues T13, T14, and S15 each coordinate ATP. T13 contributes to the sn-glycerol 3-phosphate binding site. R17 serves as a coordination point for ADP. Residues R83, E84, Y135, and D245 each coordinate sn-glycerol 3-phosphate. R83, E84, Y135, D245, and Q246 together coordinate glycerol. 2 residues coordinate ADP: T267 and G310. T267, G310, Q314, and G411 together coordinate ATP. ADP is bound by residues G411 and N415.

It belongs to the FGGY kinase family. Homotetramer and homodimer (in equilibrium).

The catalysed reaction is glycerol + ATP = sn-glycerol 3-phosphate + ADP + H(+). It functions in the pathway polyol metabolism; glycerol degradation via glycerol kinase pathway; sn-glycerol 3-phosphate from glycerol: step 1/1. With respect to regulation, activated by phosphorylation and inhibited by fructose 1,6-bisphosphate (FBP). In terms of biological role, key enzyme in the regulation of glycerol uptake and metabolism. Catalyzes the phosphorylation of glycerol to yield sn-glycerol 3-phosphate. In Lactobacillus acidophilus (strain ATCC 700396 / NCK56 / N2 / NCFM), this protein is Glycerol kinase.